Here is a 215-residue protein sequence, read N- to C-terminus: MAGEKFQKKGKEKWKEKVWYTVEAPPYLGSKEVSVALGEDSNSMVNRVVEVPISELTGNFKKSNEKALFRITNCEGTKCKTIFIGHYIGDDYIRRLVRRRKERIDIIEDVKTSDNSIITVKIVVVTDGKVTNTKKFQIRKVLTDFILNKGLSLPYSEFVRYLIGDDIYNDMISATKDIYPLKKIEVRKSELVSLSGISEIHAGSQNSGEEPVVQN.

The protein belongs to the eukaryotic ribosomal protein eS1 family.

This is Small ribosomal subunit protein eS1 from Thermoplasma volcanium (strain ATCC 51530 / DSM 4299 / JCM 9571 / NBRC 15438 / GSS1).